Reading from the N-terminus, the 379-residue chain is Type II methyltransferase M.SsoII (379 aa).

An HTH cro/C1-type domain is found at 9–66; the sequence is IKEKRERLHMTQKEFADALGLSKYGDRTIRRWERGETKPTGAELKAVIDFPDTPPYPN. Positions 72–379 constitute an SAM-dependent MTase C5-type domain; it reads YRMIDLFAGI…AEKIISTLDS (308 aa). The active site involves Cys142.

The protein belongs to the class I-like SAM-binding methyltransferase superfamily. C5-methyltransferase family.

It catalyses the reaction a 2'-deoxycytidine in DNA + S-adenosyl-L-methionine = a 5-methyl-2'-deoxycytidine in DNA + S-adenosyl-L-homocysteine + H(+). A methylase that recognizes the double-stranded sequence 5'-CCNGG-3', methylates C-2 on both strands, and protects the DNA from cleavage by the SsoII endonuclease. This Shigella sonnei protein is Type II methyltransferase M.SsoII (ssoIIM).